A 144-amino-acid chain; its full sequence is Mating factor alpha (144 aa).

A signal peptide (or 20) is located at residues 1–19; sequence MRFPSIFTAVLFAASSALA.

Functionally, the active factor is excreted into the culture medium by haploid cells of the alpha mating type and acts on cells of the opposite mating type (type A). It mediates the conjugation process between the two types by inhibiting the initiation of DNA synthesis in type a cells and synchronizing them with type alpha. The protein is Mating factor alpha of Saccharomyces uvarum (Yeast).